We begin with the raw amino-acid sequence, 273 residues long: Cbp/p300-interacting transactivator 2 (273 aa).

Residues 137–204 (DLHPAAGHQM…GSGGSGSSNM (68 aa)) form a disordered region. A compositionally biased stretch (gly residues) spans 165–200 (STPGGSGGSSTPGGSGGSAGGGAGSSNSGGGSGGSG).

It belongs to the CITED family. In terms of assembly, interacts (via C-terminus) with SMAD2. Interacts (via C-terminus) with SMAD3 (via MH2 domain). Interacts with LHX2 (via LIM domains). Interacts with WT1. Interacts (via C-terminus) with EP300 (via CH1 domain); the interaction is stimulated in response to hypoxia. Interacts with PPARA. Interacts (via C-terminus) with TFAP2A, TFAP2B and TFAP2C.

Its subcellular location is the nucleus. Functionally, transcriptional coactivator of the p300/CBP-mediated transcription complex. Acts as a bridge, linking TFAP2 transcription factors and the p300/CBP transcriptional coactivator complex in order to stimulate TFAP2-mediated transcriptional activation. Positively regulates TGF-beta signaling through its association with the SMAD/p300/CBP-mediated transcriptional coactivator complex. Stimulates the peroxisome proliferator-activated receptors PPARA transcriptional activity. Enhances estrogen-dependent transactivation mediated by estrogen receptors. Also acts as a transcriptional corepressor; interferes with the binding of the transcription factors HIF1A or STAT2 and the p300/CBP transcriptional coactivator complex. Participates in sex determination and early gonad development by stimulating transcription activation of SRY. Plays a role in controlling left-right patterning during embryogenesis; potentiates transcriptional activation of NODAL-mediated gene transcription in the left lateral plate mesoderm (LPM). Plays an essential role in differentiation of the adrenal cortex from the adrenogonadal primordium (AGP); stimulates WT1-mediated transcription activation thereby up-regulating the nuclear hormone receptor NR5A1 promoter activity. Associates with chromatin to the PITX2 P1 promoter region. The protein is Cbp/p300-interacting transactivator 2 (CITED2) of Saguinus labiatus (Red-chested mustached tamarin).